Consider the following 465-residue polypeptide: Alpha-2A adrenergic receptor (465 aa).

Residues 1–48 lie on the Extracellular side of the membrane; the sequence is MFRQEQPLAEGSFAPMGSLQPDAGNASWNGTEAPGGGARATPYSLQVT. Asparagine 25 and asparagine 29 each carry an N-linked (GlcNAc...) asparagine glycan. A helical transmembrane segment spans residues 49 to 74; it reads LTLVCLAGLLMLLTVFGNVLVIIAVF. Topologically, residues 75–85 are cytoplasmic; it reads TSRALKAPQNL. A helical membrane pass occupies residues 86–111; that stretch reads FLVSLASADILVATLVIPFSLANEVM. Residues 112–121 are Extracellular-facing; sequence GYWYFGKAWC. Cysteine 121 and cysteine 203 are joined by a disulfide. The chain crosses the membrane as a helical span at residues 122-144; that stretch reads EIYLALDVLFCTSSIVHLCAISL. At 145 to 166 the chain is on the cytoplasmic side; sequence DRYWSITQAIEYNLKRTPRRIK. Residues 167–187 form a helical membrane-spanning segment; that stretch reads AIIITVWVISAVISFPPLISI. At 188–209 the chain is on the extracellular side; sequence EKKGGGGGPQPAEPRCEINDQK. Residues 210-232 form a helical membrane-spanning segment; it reads WYVISSCIGSFFAPCLIMILVYV. The Cytoplasmic portion of the chain corresponds to 233–389; it reads RIYQIAKRRT…RQNREKRFTF (157 aa). The segment at 242–368 is disordered; it reads TRVPPSRRGP…TPAAGPGEER (127 aa). Over residues 313 to 330 the composition is skewed to basic and acidic residues; sequence SSDHAERPPGPRRPERGP. The residue at position 346 (serine 346) is a Phosphoserine. Position 368 is an omega-N-methylarginine (arginine 368). Residues 390–410 form a helical membrane-spanning segment; that stretch reads VLAVVIGVFVVCWFPFFFTYT. The Extracellular portion of the chain corresponds to 411 to 424; the sequence is LTAVGCSVPRTLFK. Residues 425–444 traverse the membrane as a helical segment; sequence FFFWFGYCNSSLNPVIYTIF. The Cytoplasmic segment spans residues 445–465; the sequence is NHDFRRAFKKILCRGDRKRIV. Cysteine 457 carries S-palmitoyl cysteine lipidation.

This sequence belongs to the G-protein coupled receptor 1 family. Adrenergic receptor subfamily. ADRA2A sub-subfamily.

It is found in the cell membrane. In terms of biological role, alpha-2 adrenergic receptors mediate the catecholamine-induced inhibition of adenylate cyclase through the action of G proteins. The rank order of potency for agonists of this receptor is oxymetazoline &gt; clonidine &gt; epinephrine &gt; norepinephrine &gt; phenylephrine &gt; dopamine &gt; p-synephrine &gt; p-tyramine &gt; serotonin = p-octopamine. For antagonists, the rank order is yohimbine &gt; phentolamine = mianserine &gt; chlorpromazine = spiperone = prazosin &gt; propanolol &gt; alprenolol = pindolol. The polypeptide is Alpha-2A adrenergic receptor (Homo sapiens (Human)).